A 347-amino-acid chain; its full sequence is Ribosomal RNA large subunit methyltransferase M (347 aa).

S-adenosyl-L-methionine contacts are provided by residues S184, 217–220 (APGG), D236, D256, and D272. Catalysis depends on K301, which acts as the Proton acceptor.

The protein belongs to the class I-like SAM-binding methyltransferase superfamily. RNA methyltransferase RlmE family. RlmM subfamily. In terms of assembly, monomer.

The protein resides in the cytoplasm. The enzyme catalyses cytidine(2498) in 23S rRNA + S-adenosyl-L-methionine = 2'-O-methylcytidine(2498) in 23S rRNA + S-adenosyl-L-homocysteine + H(+). Functionally, catalyzes the 2'-O-methylation at nucleotide C2498 in 23S rRNA. In Xanthomonas oryzae pv. oryzae (strain MAFF 311018), this protein is Ribosomal RNA large subunit methyltransferase M.